The following is a 336-amino-acid chain: Major histocompatibility complex class I-related protein 1 (336 aa).

The signal sequence occupies residues 1–18 (MMLLLPLIIVLMMKLSDA). The segment at 19–105 (RTHSLRYFRL…KQLQHHYNHS (87 aa)) is alpha-1. The tract at residues 19–197 (RTHSLRYFRL…EYGKDALQRT (179 aa)) is antigen-binding cleft. At 19-298 (RTHSLRYFRL…QESETILLVV (280 aa)) the chain is on the extracellular side. The 8-(9H-purin-6-yl)-2-oxa-8-azabicyclo[3.3.1]nona-3,6-diene-4,6-dicarbaldehyde site is built by Tyr25 and Arg27. 3 residues coordinate 5-(2-oxoethylideneamino)-6-(D-ribitylamino)uracil: Arg27, Ser42, and Lys61. Arg27, Ser42, and Lys61 together coordinate 5-(2-oxopropylideneamino)-6-(D-ribitylamino)uracil. 3 residues coordinate 7-hydroxy-6-methyl-8-(1-D-ribityl)lumazine: Arg27, Ser42, and Lys61. Residues Lys61 and His76 each coordinate 8-(9H-purin-6-yl)-2-oxa-8-azabicyclo[3.3.1]nona-3,6-diene-4,6-dicarbaldehyde. Lys61 contributes to the 2-amino-4-oxopteridine-6-carbaldehyde binding site. Residue Lys61 coordinates pyridoxal. N-linked (GlcNAc...) asparagine glycosylation is present at Asn103. Residues 106–197 (GFHTYQRMIG…EYGKDALQRT (92 aa)) form an alpha-2 region. Arg112 serves as a coordination point for 8-(9H-purin-6-yl)-2-oxa-8-azabicyclo[3.3.1]nona-3,6-diene-4,6-dicarbaldehyde. 3 residues coordinate 5-(2-oxoethylideneamino)-6-(D-ribitylamino)uracil: Arg112, Tyr170, and Gln171. 3 residues coordinate 5-(2-oxopropylideneamino)-6-(D-ribitylamino)uracil: Arg112, Tyr170, and Gln171. Arg112, Tyr170, and Gln171 together coordinate 7-hydroxy-6-methyl-8-(1-D-ribityl)lumazine. Intrachain disulfides connect Cys116-Cys179 and Cys218-Cys274. Residues 198 to 289 (EPPKVRVNHK…GVHMVLQGFQ (92 aa)) form an alpha-3 region. The region spanning 200–295 (PKVRVNHKET…QGFQESETIL (96 aa)) is the Ig-like C1-type domain. The interval 290–298 (ESETILLVV) is connecting peptide. Residues 299-319 (KAVGFIVLAIALAGVGILAWR) form a helical membrane-spanning segment. The Cytoplasmic portion of the chain corresponds to 320–336 (KRPRGKNKVICLSTPEH).

The protein belongs to the MHC class I family. As to quaternary structure, heterotrimer that consists of MR1, B2M and metabolite antigen. Major classes of metabolite ligands presented by MR1 include riboflavin-related antigens, pyrimidines and ribityl lumazines, nucleobase adducts and folate derivatives. Forms reversible covalent Schiff base complexes with microbial pyrimidine-based metabolite, which serves as a molecular switch triggering complete folding, stable association with B2M and translocation of the ternary complex from endoplasmic reticulum to the plasma membrane. Alternatively, forms non-Schiff base complexes with ribityl lumazines. On antigen-presenting cells, the ternary complex interacts with TCR on MR1-restricted T cells. Interacts with TAPBP and TAPBPL chaperones in the endoplasmic reticulum. TAPBP associated or not with MHC class I peptide loading complex binds ligand-free MR1 or MR1-B2M complex, providing for stable MR1 pools ready for metabolite antigen processing. TAPBPL interacts with MR1 in a ligand-independent way; this interaction may stabilize MR1 pool and facilitate ligand loading and dissociation. Structurally, MR1-B2M heterodimer adopts a topology similar to classical MHC class I molecules, with alpha-1 and alpha-2 domains of MR1 forming the antigen-binding cleft composed of two alpha-helices resting on a floor of 7-stranded anti-parallel beta-pleated sheet. MR1-B2M heterodimer (via alpha-helices) interacts with TCR (via CDR domains). N-glycosylated.

The protein localises to the cell membrane. It is found in the endoplasmic reticulum membrane. The protein resides in the golgi apparatus membrane. It localises to the early endosome membrane. Its subcellular location is the late endosome membrane. Functionally, antigen-presenting molecule specialized in displaying microbial pyrimidine-based metabolites to alpha-beta T cell receptors (TCR) on innate-type mucosal-associated invariant T (MAIT) cells. In complex with B2M preferentially presents riboflavin-derived metabolites to semi-invariant TCRs on MAIT cells, guiding immune surveillance of the microbial metabolome at mucosal epithelial barriers. Signature pyrimidine-based microbial antigens are generated via non-enzymatic condensation of metabolite intermediates of the riboflavin pathway with by-products arising from other metabolic pathways such as glycolysis. Typical potent antigenic metabolites are 5-(2-oxoethylideneamino)-6-D-ribitylaminouracil (5-OE-RU) and 5-(2-oxopropylideneamino)-6-D-ribitylaminouracil (5-OP-RU), products of condensation of 5-amino-6-D-ribityaminouracil (5-A-RU) with glyoxal or methylglyoxal by-products, respectively. May present microbial antigens to various MAIT cell subsets, providing for unique recognition of diverse microbes, including pathogens that do not synthesize riboflavin. Upon antigen recognition, elicits rapid innate-type MAIT cell activation to eliminate pathogenic microbes by directly killing infected cells. During T cell development, drives thymic selection and post-thymic terminal differentiation of MAIT cells in a process dependent on commensal microflora. Acts as an immune sensor of cancer cell metabolome. May present a tumor-specific or -associated metabolite essential for cancer cell survival to a pan-cancer TCR on a non-MAIT CD8-positive T cell clone, triggering T cell-mediated killing of a wide range of cancer cell types. May present tumor-enriched pyridoxal and pyridoxal 5'-phosphate antigens, enabling preferential recognition of cancer cells. Presents nucleobase carbonyl adducts generated during oxidative stress. Captures M3Ade, a nucleobase adduct composed of one adenine modified by a malondialdehyde trimer, for recognition by MR1-restricted T cell clones expressing a polyclonal TCR repertoire. This chain is Major histocompatibility complex class I-related protein 1, found in Bos taurus (Bovine).